A 91-amino-acid chain; its full sequence is Small ribosomal subunit protein bS20 (91 aa).

It belongs to the bacterial ribosomal protein bS20 family.

In terms of biological role, binds directly to 16S ribosomal RNA. This Mycoplasma mobile (strain ATCC 43663 / 163K / NCTC 11711) (Mesomycoplasma mobile) protein is Small ribosomal subunit protein bS20.